Consider the following 415-residue polypeptide: Tyrosine-protein phosphatase non-receptor type 2 (415 aa).

The Tyrosine-protein phosphatase domain occupies 5–275 (IEREFEELDT…RFSYMAIIEG (271 aa)). A Phosphotyrosine modification is found at Y22. S52 is subject to Phosphoserine. Y68 is subject to Phosphotyrosine. Residues D182, 216 to 222 (CSAGIGR), and Q260 contribute to the substrate site. The active-site Phosphocysteine intermediate is C216. The residue at position 216 (C216) is an S-nitrosocysteine. Residues S293, S298, and S304 each carry the phosphoserine modification. The endoplasmic reticulum location stretch occupies residues 346–415 (ESALRKRIRE…WTLFFQQNAL (70 aa)). Residues 376–415 (ERKRKRWLYWQPILTKMGFMSVILVGAFVGWTLFFQQNAL) are mediates interaction with STX17.

It belongs to the protein-tyrosine phosphatase family. Non-receptor class 1 subfamily. In terms of assembly, interacts with RMDN3. Isoform 1 interacts with TMED9. Isoform 1 interacts with STX17; dephosphorylates STX17. Interacts with ITGA1 (via cytoplasmic domain); activates the phosphatase activity towards EGFR. Interacts with TRAF2; probably involved in tumor necrosis factor-mediated signaling. Interacts with MET. Interacts with FAM220A and STAT3; interaction with FAM220A promotes interaction of PTPN2 with transcriptional activator STAT3, leading to dephosphorylation of STAT3 by PTPN2 and negative regulation of STAT3 transcriptional activator activity. Specifically phosphorylated in a cell cycle-dependent manner by cyclin-dependent kinases CDK1 and CDK2. Probably activated through phosphorylation by PKR. Ubiquitously expressed. Isoform 2 is probably the major isoform. Isoform 1 is expressed in T-cells and in placenta.

Its subcellular location is the endoplasmic reticulum. The protein resides in the endoplasmic reticulum-Golgi intermediate compartment. The protein localises to the nucleus. It is found in the cytoplasm. It localises to the cell membrane. It carries out the reaction O-phospho-L-tyrosyl-[protein] + H2O = L-tyrosyl-[protein] + phosphate. Non-receptor type tyrosine-specific phosphatase that dephosphorylates receptor protein tyrosine kinases including INSR, EGFR, CSF1R, PDGFR. Also dephosphorylates non-receptor protein tyrosine kinases like JAK1, JAK2, JAK3, Src family kinases, STAT1, STAT3 and STAT6 either in the nucleus or the cytoplasm. Negatively regulates numerous signaling pathways and biological processes like hematopoiesis, inflammatory response, cell proliferation and differentiation, and glucose homeostasis. Plays a multifaceted and important role in the development of the immune system. Functions in T-cell receptor signaling through dephosphorylation of FYN and LCK to control T-cells differentiation and activation. Dephosphorylates CSF1R, negatively regulating its downstream signaling and macrophage differentiation. Negatively regulates cytokine (IL2/interleukin-2 and interferon)-mediated signaling through dephosphorylation of the cytoplasmic kinases JAK1, JAK3 and their substrate STAT1, that propagate signaling downstream of the cytokine receptors. Also regulates the IL6/interleukin-6 and IL4/interleukin-4 cytokine signaling through dephosphorylation of STAT3 and STAT6 respectively. In addition to the immune system, it is involved in anchorage-dependent, negative regulation of EGF-stimulated cell growth. Activated by the integrin ITGA1/ITGB1, it dephosphorylates EGFR and negatively regulates EGF signaling. Dephosphorylates PDGFRB and negatively regulates platelet-derived growth factor receptor-beta signaling pathway and therefore cell proliferation. Negatively regulates tumor necrosis factor-mediated signaling downstream via MAPK through SRC dephosphorylation. May also regulate the hepatocyte growth factor receptor signaling pathway through dephosphorylation of the hepatocyte growth factor receptor MET. Also plays an important role in glucose homeostasis. For instance, negatively regulates the insulin receptor signaling pathway through the dephosphorylation of INSR and control gluconeogenesis and liver glucose production through negative regulation of the IL6 signaling pathways. May also bind DNA. In Homo sapiens (Human), this protein is Tyrosine-protein phosphatase non-receptor type 2 (PTPN2).